The sequence spans 839 residues: Protein translocase subunit SecA (839 aa).

ATP contacts are provided by residues glutamine 85, 103–107 (GEGKT), and aspartate 492. The segment at 794–820 (EINYSGPDAGDTKKEPVRRKEKKIGRN) is disordered. Zn(2+)-binding residues include cysteine 823, cysteine 825, cysteine 834, and cysteine 835.

Belongs to the SecA family. Monomer and homodimer. Part of the essential Sec protein translocation apparatus which comprises SecA, SecYEG and auxiliary proteins SecDF. Other proteins may also be involved. It depends on Zn(2+) as a cofactor.

The protein localises to the cell membrane. The protein resides in the cytoplasm. It catalyses the reaction ATP + H2O + cellular proteinSide 1 = ADP + phosphate + cellular proteinSide 2.. Its function is as follows. Part of the Sec protein translocase complex. Interacts with the SecYEG preprotein conducting channel. Has a central role in coupling the hydrolysis of ATP to the transfer of proteins into and across the cell membrane, serving as an ATP-driven molecular motor driving the stepwise translocation of polypeptide chains across the membrane. This chain is Protein translocase subunit SecA, found in Clostridium acetobutylicum (strain ATCC 824 / DSM 792 / JCM 1419 / IAM 19013 / LMG 5710 / NBRC 13948 / NRRL B-527 / VKM B-1787 / 2291 / W).